A 463-amino-acid polypeptide reads, in one-letter code: L-seryl-tRNA(Sec) selenium transferase (463 aa).

At Lys295 the chain carries N6-(pyridoxal phosphate)lysine.

The protein belongs to the SelA family. Homodecamer; pentamer of dimers. Binds only one seryl-tRNA(Sec) per dimer. Pyridoxal 5'-phosphate serves as cofactor.

The protein resides in the cytoplasm. It carries out the reaction L-seryl-tRNA(Sec) + selenophosphate + H(+) = L-selenocysteinyl-tRNA(Sec) + phosphate. It participates in aminoacyl-tRNA biosynthesis; selenocysteinyl-tRNA(Sec) biosynthesis; selenocysteinyl-tRNA(Sec) from L-seryl-tRNA(Sec) (bacterial route): step 1/1. Its function is as follows. Converts seryl-tRNA(Sec) to selenocysteinyl-tRNA(Sec) required for selenoprotein biosynthesis. This is L-seryl-tRNA(Sec) selenium transferase from Escherichia coli O17:K52:H18 (strain UMN026 / ExPEC).